A 350-amino-acid polypeptide reads, in one-letter code: Flap endonuclease 1 (350 aa).

An N-domain region spans residues 1 to 102; the sequence is MGVNLKDLIP…KEIEKRRKIR (102 aa). 7 residues coordinate Mg(2+): aspartate 31, aspartate 84, glutamate 156, glutamate 158, aspartate 177, aspartate 179, and aspartate 240. An I-domain region spans residues 120 to 262; that stretch reads AARRYAMMSA…KALQLVKAYK (143 aa). Residues 341 to 349 are interaction with PCNA; the sequence is KQLGLEAWF.

The protein belongs to the XPG/RAD2 endonuclease family. FEN1 subfamily. As to quaternary structure, interacts with PCNA. PCNA stimulates the nuclease activity without altering cleavage specificity. Mg(2+) is required as a cofactor.

Structure-specific nuclease with 5'-flap endonuclease and 5'-3' exonuclease activities involved in DNA replication and repair. During DNA replication, cleaves the 5'-overhanging flap structure that is generated by displacement synthesis when DNA polymerase encounters the 5'-end of a downstream Okazaki fragment. Binds the unpaired 3'-DNA end and kinks the DNA to facilitate 5' cleavage specificity. Cleaves one nucleotide into the double-stranded DNA from the junction in flap DNA, leaving a nick for ligation. Also involved in the base excision repair (BER) pathway. Acts as a genome stabilization factor that prevents flaps from equilibrating into structures that lead to duplications and deletions. Also possesses 5'-3' exonuclease activity on nicked or gapped double-stranded DNA. This Staphylothermus marinus (strain ATCC 43588 / DSM 3639 / JCM 9404 / F1) protein is Flap endonuclease 1.